We begin with the raw amino-acid sequence, 242 residues long: Biosynthetic peptidoglycan transglycosylase (242 aa).

The chain crosses the membrane as a helical span at residues 19-39; sequence ILAALAVFWGGGIALFSVVPV.

The protein belongs to the glycosyltransferase 51 family.

The protein resides in the cell inner membrane. The enzyme catalyses [GlcNAc-(1-&gt;4)-Mur2Ac(oyl-L-Ala-gamma-D-Glu-L-Lys-D-Ala-D-Ala)](n)-di-trans,octa-cis-undecaprenyl diphosphate + beta-D-GlcNAc-(1-&gt;4)-Mur2Ac(oyl-L-Ala-gamma-D-Glu-L-Lys-D-Ala-D-Ala)-di-trans,octa-cis-undecaprenyl diphosphate = [GlcNAc-(1-&gt;4)-Mur2Ac(oyl-L-Ala-gamma-D-Glu-L-Lys-D-Ala-D-Ala)](n+1)-di-trans,octa-cis-undecaprenyl diphosphate + di-trans,octa-cis-undecaprenyl diphosphate + H(+). It participates in cell wall biogenesis; peptidoglycan biosynthesis. Functionally, peptidoglycan polymerase that catalyzes glycan chain elongation from lipid-linked precursors. This Salmonella schwarzengrund (strain CVM19633) protein is Biosynthetic peptidoglycan transglycosylase.